The sequence spans 203 residues: Outer-membrane lipoprotein carrier protein (203 aa).

Positions 1-21 (MKKMAIACALLSSVVASSVWA) are cleaved as a signal peptide. Positions 178-203 (QQNGAVDPSKFTFTPPQGVTIDDQRK) are disordered.

Belongs to the LolA family. In terms of assembly, monomer.

Its subcellular location is the periplasm. Functionally, participates in the translocation of lipoproteins from the inner membrane to the outer membrane. Only forms a complex with a lipoprotein if the residue after the N-terminal Cys is not an aspartate (The Asp acts as a targeting signal to indicate that the lipoprotein should stay in the inner membrane). This Salmonella paratyphi A (strain ATCC 9150 / SARB42) protein is Outer-membrane lipoprotein carrier protein.